The primary structure comprises 971 residues: uncharacterized protein (971 aa).

The next 13 membrane-spanning stretches (helical) occupy residues 11–31, 516–536, 547–567, 569–589, 615–635, 651–671, 727–747, 763–783, 795–815, 817–837, 878–898, 900–920, and 923–943; these read WLLKIGIILVLAFLGLFGIIF, FASSFIALGVIILLATIALGI, LALALSAISSLAFFSAVGGVV, VFSFVGIFFVVAVNIINLITL, FFTMIETHICWLLSALVVIYL, AITSYFLNYGLGVILVWLFVS, LLFIWLTVLAFGVVMLGLYLG, STGIMLGVGVISLLYLLYSLP, IALILLAAGLFGAMYLANFIF, IDQSTIQLIIFVYLFWLFFQA, IGSSVLILLFIVYAAFNFGGI, GTINLVIFYLIAIVALFSVFV, and LPLFSFGLINGWLSPYNYVQI.

It is found in the cell membrane. This is an uncharacterized protein from Mycoplasma pneumoniae (strain ATCC 29342 / M129 / Subtype 1) (Mycoplasmoides pneumoniae).